A 114-amino-acid polypeptide reads, in one-letter code: Large ribosomal subunit protein bL20 (114 aa).

This sequence belongs to the bacterial ribosomal protein bL20 family.

Functionally, binds directly to 23S ribosomal RNA and is necessary for the in vitro assembly process of the 50S ribosomal subunit. It is not involved in the protein synthesizing functions of that subunit. The polypeptide is Large ribosomal subunit protein bL20 (Flavobacterium psychrophilum (strain ATCC 49511 / DSM 21280 / CIP 103535 / JIP02/86)).